The primary structure comprises 557 residues: Protein Red (557 aa).

The interval 1–90 (MPERDSEPFS…YAKLRQQEIE (90 aa)) is disordered. Residues 16 to 25 (DGHDVDDPHS) show a composition bias toward basic and acidic residues. Over residues 42–53 (TPRAAPTSAPPS) the composition is skewed to low complexity. Lys-98 and Lys-137 each carry N6-acetyllysine. Lys-151 participates in a covalent cross-link: Glycyl lysine isopeptide (Lys-Gly) (interchain with G-Cter in SUMO2). The disordered stretch occupies residues 181–205 (KEKEEEELMEKPQKETKKDEDPENK). Ser-287 carries the phosphoserine modification. Residues 294-303 (RNKKLKKKDK) show a composition bias toward basic residues. The segment at 294–402 (RNKKLKKKDK…PMDVDKGPGS (109 aa)) is disordered. Basic and acidic residues predominate over residues 304 to 313 (GKLEEKKPPE). Residues Lys-310 and Lys-331 each participate in a glycyl lysine isopeptide (Lys-Gly) (interchain with G-Cter in SUMO2) cross-link. Over residues 332 to 398 (TPRDKERERY…VDDEPMDVDK (67 aa)) the composition is skewed to basic and acidic residues. 17 tandem repeats follow at residues 342–343 (RE), 344–345 (RE), 346–347 (RD), 348–349 (RE), 350–351 (RD), 352–353 (RD), 354–355 (RE), 356–357 (RD), 358–359 (RE), 360–361 (RD), 362–363 (RE), 364–365 (RE), 366–367 (RE), 368–369 (RD), 370–371 (RE), 372–373 (RE), and 374–375 (RE). A 17 X 2 AA tandem repeats of R-[ED] region spans residues 342–375 (RERERDRERDRDRERDRERDRERERERDRERERE). Residues Lys-386, Lys-388, Lys-404, and Lys-408 each participate in a glycyl lysine isopeptide (Lys-Gly) (interchain with G-Cter in SUMO2) cross-link. Phosphoserine is present on residues Ser-417 and Ser-460. Thr-485 carries the post-translational modification Phosphothreonine. Glycyl lysine isopeptide (Lys-Gly) (interchain with G-Cter in SUMO2) cross-links involve residues Lys-496, Lys-501, and Lys-509. A Phosphoserine modification is found at Ser-536. Glycyl lysine isopeptide (Lys-Gly) (interchain with G-Cter in SUMO2) cross-links involve residues Lys-541, Lys-543, Lys-544, and Lys-553.

Belongs to the RED family. As to quaternary structure, component of the spliceosome B complex. Interacts with SMU1. Interacts with MAD1L1. May interact with DHX15.

The protein resides in the nucleus. It is found in the nucleoplasm. The protein localises to the chromosome. It localises to the cytoplasm. Its subcellular location is the cytoskeleton. The protein resides in the spindle pole. Its function is as follows. Involved in pre-mRNA splicing as a component of the spliceosome. Auxiliary spliceosomal protein that regulates selection of alternative splice sites in a small set of target pre-mRNA species. Required for normal mitotic cell cycle progression. Recruits MAD1L1 and MAD2L1 to kinetochores, and is required to trigger the spindle assembly checkpoint. Required for normal accumulation of SMU1. In Rattus norvegicus (Rat), this protein is Protein Red (Ik).